We begin with the raw amino-acid sequence, 396 residues long: tRNA (guanine-N(7)-)-methyltransferase non-catalytic subunit wuho (396 aa).

4 WD repeats span residues 75–115 (KVEV…AQLL), 162–201 (GHLSIVYDVLWSEDQQYIITCDRDDKIRVTNYPATFDIHS), 205–243 (GHKEFVSGLAMLTEQHIISASGDKTLRVWNYTCGKELLL), and 302–342 (AGTW…RASG).

Belongs to the WD repeat TRM82 family. Forms a heterodimer with the catalytic subunit Mettl1. Interacts with mei-P26 and weakly interacts with bgcn; required for the function or formation of the mei-P26-bgcn-bam-sxl complex. Interacts with nanos; may be involved in mei-P26-dependent derepression of the BMP signaling pathway. Interacts with Myc; the interaction may be mediated by mei-P26 and may be involved in the regulation of ribosome biogenesis. As to expression, in testis, it is present at high level in hub cells, a niche for germline stem cells of testis. Ubiquitously expressed in all testicular cells throughout spermatogenesis. Ubiquitously expressed in all germline and somatic cells of the ovary.

It localises to the nucleus. Its subcellular location is the cytoplasm. Its pathway is tRNA modification; N(7)-methylguanine-tRNA biosynthesis. In terms of biological role, required for the Mettl1-dependent formation of N(7)-methylguanine at position 46 (m7G46) in tRNA. In the Mettl1-wuho methyltransferase complex, it is required to stabilize and induce conformational changes of the catalytic subunit. Required for binding of nanos mRNA and repression of translation by the mei-P26-bgcn-bam-sxl complex. May cooperate with mei-P26 and nanos to derepress the BMP signaling pathway. May cooperate with mei-P26 to suppress expression of a subset of microRNAs. May cooperate with mei-P26 to regulate bam expression levels in germline cells during gametogenesis. Required to promote mitosis to meiosis transition during gametogenesis. May regulate germline cell division in part by regulating ribosome biogenesis. This is tRNA (guanine-N(7)-)-methyltransferase non-catalytic subunit wuho from Drosophila pseudoobscura pseudoobscura (Fruit fly).